Here is a 1760-residue protein sequence, read N- to C-terminus: Chitin synthase A (1760 aa).

Asn-157 carries an N-linked (GlcNAc...) asparagine glycan. Helical transmembrane passes span 729–749 (IWTG…LRFV) and 765–785 (LVLV…IIAF). N-linked (GlcNAc...) asparagine glycans are attached at residues Asn-876 and Asn-996. Residues 1027–1047 (ILLAFTCLICAVILVKFLAAL) traverse the membrane as a helical segment. N-linked (GlcNAc...) asparagine glycosylation is present at Asn-1392. 3 helical membrane passes run 1417–1437 (FVVL…VYLG), 1449–1469 (IPII…IIFI), and 1477–1497 (IGWM…LPMY). 3 N-linked (GlcNAc...) asparagine glycosylation sites follow: Asn-1557, Asn-1645, and Asn-1650. The tract at residues 1670-1691 (DNLLGVPRPNSRSPVGGYTSRP) is disordered. Positions 1702-1758 (GPDEMAITDAIRSCLAEVDLDTVTKKQVRALVEQRLQATLTGDKRAFLDRQIDQELA) constitute a DEK-C domain.

Belongs to the chitin synthase family. Class V subfamily.

Its subcellular location is the cell membrane. The catalysed reaction is [(1-&gt;4)-N-acetyl-beta-D-glucosaminyl](n) + UDP-N-acetyl-alpha-D-glucosamine = [(1-&gt;4)-N-acetyl-beta-D-glucosaminyl](n+1) + UDP + H(+). Its function is as follows. Polymerizes chitin, a structural polymer of the cell wall and septum, by transferring the sugar moiety of UDP-GlcNAc to the non-reducing end of the growing chitin polymer. Plays an important role in cell-wall formation during both hyphal growth and conidiation. The polypeptide is Chitin synthase A (Aspergillus oryzae (strain ATCC 42149 / RIB 40) (Yellow koji mold)).